A 157-amino-acid chain; its full sequence is 6,7-dimethyl-8-ribityllumazine synthase (157 aa).

Residues F22, 57–59 (AYE), and 81–83 (TVI) each bind 5-amino-6-(D-ribitylamino)uracil. A (2S)-2-hydroxy-3-oxobutyl phosphate-binding site is contributed by 86–87 (GT). H89 acts as the Proton donor in catalysis. F114 provides a ligand contact to 5-amino-6-(D-ribitylamino)uracil. Residue R128 participates in (2S)-2-hydroxy-3-oxobutyl phosphate binding.

The protein belongs to the DMRL synthase family. As to quaternary structure, forms an icosahedral capsid composed of 60 subunits, arranged as a dodecamer of pentamers.

It carries out the reaction (2S)-2-hydroxy-3-oxobutyl phosphate + 5-amino-6-(D-ribitylamino)uracil = 6,7-dimethyl-8-(1-D-ribityl)lumazine + phosphate + 2 H2O + H(+). The protein operates within cofactor biosynthesis; riboflavin biosynthesis; riboflavin from 2-hydroxy-3-oxobutyl phosphate and 5-amino-6-(D-ribitylamino)uracil: step 1/2. Catalyzes the formation of 6,7-dimethyl-8-ribityllumazine by condensation of 5-amino-6-(D-ribitylamino)uracil with 3,4-dihydroxy-2-butanone 4-phosphate. This is the penultimate step in the biosynthesis of riboflavin. The protein is 6,7-dimethyl-8-ribityllumazine synthase of Pasteurella multocida (strain Pm70).